The following is a 24-amino-acid chain: Humanin-like 3 (24 aa).

This sequence belongs to the humanin family. As to expression, highly expressed in testis. Also expressed in kidney, heart, skeletal muscles and brain.

The protein localises to the secreted. It localises to the cytoplasm. Plays a role as a neuroprotective and antiapoptotic factor. The protein is Humanin-like 3 of Homo sapiens (Human).